Consider the following 662-residue polypeptide: MAAENEASQESALGAYSPVDYMSITSFPRLPEDEPAPAAPLRGRKDEDAFLGDPDTDPDSFLKSARLQRLPSSSSEMGSQDGSPLRETRKDPFSAAAAECSCRQDGLTVIVTACLTFATGVTVALVMQIYFGDPQIFQQGAVVTDAARCTSLGIEVLSKQGSSVDAAVAAALCLGIVAPHSSGLGGGGVMLVHDIRRNESHLIDFRESAPGALREETLQRSWETKPGLLVGVPGMVKGLHEAHQLYGRLPWSQVLAFAAAVAQDGFNVTHDLARALAEQLPPNMSERFRETFLPSGRPPLPGSLLHRPDLAEVLDVLGTSGPAAFYAGGNLTLEMVAEAQHAGGVITEEDFSNYSALVEKPVCGVYRGHLVLSPPPPHTGPALISALNILEGFNLTSLVSREQALHWVAETLKIALALASRLGDPVYDSTITESMDDMLSKVEAAYLRGHINDSQAAPAPLLPVYELDGAPTAAQVLIMGPDDFIVAMVSSLNQPFGSGLITPSGILLNSQMLDFSWPNRTANHSAPSLENSVQPGKRPLSFLLPTVVRPAEGLCGTYLALGANGAARGLSGLTQVLLNVLTLNRNLSDSLARGRLHPDLQSNLLQVDSEFTEEEIEFLEARGHHVEKVDVLSWVHGSRRTNNFIIAVKDPRSPDAAGATIL.

Residues M1–G106 lie on the Cytoplasmic side of the membrane. Residues S17, S72, S79, and S83 each carry the phosphoserine modification. The interval S26–K90 is disordered. Over residues S72–S83 the composition is skewed to low complexity. The chain crosses the membrane as a helical; Signal-anchor for type II membrane protein span at residues L107 to M127. Residues Q128–L662 are Extracellular-facing. N198, N267, N283, N330, N353, N394, N452, N519, N523, and N586 each carry an N-linked (GlcNAc...) asparagine glycan.

This sequence belongs to the gamma-glutamyltransferase family. In terms of assembly, interacts with TLCD3A. As to quaternary structure, heterodimer composed of the light and heavy chains. The active site is located in the light chain. Post-translationally, cleaved by autocatalysis into a large and a small subunit and the autocatalytic cleavage is essential to the functional activation of the enzyme. Widely expressed, but at low level, except in the airway epithelial cells. Detected in brain, heart, kidney, liver, lung, spleen, testis and trachea.

The protein resides in the membrane. It carries out the reaction an N-terminal (5-L-glutamyl)-[peptide] + an alpha-amino acid = 5-L-glutamyl amino acid + an N-terminal L-alpha-aminoacyl-[peptide]. The enzyme catalyses glutathione + H2O = L-cysteinylglycine + L-glutamate. The catalysed reaction is an S-substituted glutathione + H2O = an S-substituted L-cysteinylglycine + L-glutamate. Its pathway is sulfur metabolism; glutathione metabolism. Its function is as follows. Hydrolyzes and transfers gamma-glutamyl moieties from glutathione and other gamma-glutamyl compounds to acceptors. In Homo sapiens (Human), this protein is Glutathione hydrolase 7.